The primary structure comprises 434 residues: NFATC2-interacting protein (434 aa).

Disordered regions lie at residues 1 to 63 (MGSP…TPAL) and 176 to 237 (GSED…RAYN). Pro residues predominate over residues 28–59 (GPQPCPKPRGPQPCPKPRGPQPCPKPRGPQPC). The span at 228–237 (PVRRKGRAYN) shows a compositional bias: basic residues. The Ubiquitin-like domain maps to 275–351 (PELTVKVRRG…IDCVVLSPPD (77 aa)).

It is found in the nucleus. It localises to the cytoplasm. Regulates the magnitude of NFAT-driven transcription of a specific subset of cytokine genes. The protein is NFATC2-interacting protein (nfatc2ip) of Xenopus tropicalis (Western clawed frog).